A 506-amino-acid polypeptide reads, in one-letter code: Glutamate--tRNA ligase (506 aa).

A 'HIGH' region motif is present at residues 24-34; sequence PSPTGLQHIGG. The Zn(2+) site is built by cysteine 121, cysteine 123, cysteine 148, and histidine 150. Positions 266–270 match the 'KMSKS' region motif; the sequence is KLSKR. Lysine 269 provides a ligand contact to ATP.

It belongs to the class-I aminoacyl-tRNA synthetase family. Glutamate--tRNA ligase type 1 subfamily. In terms of assembly, monomer. Requires Zn(2+) as cofactor.

It is found in the cytoplasm. It catalyses the reaction tRNA(Glu) + L-glutamate + ATP = L-glutamyl-tRNA(Glu) + AMP + diphosphate. Catalyzes the attachment of glutamate to tRNA(Glu) in a two-step reaction: glutamate is first activated by ATP to form Glu-AMP and then transferred to the acceptor end of tRNA(Glu). This is Glutamate--tRNA ligase from Borrelia recurrentis (strain A1).